The following is a 112-amino-acid chain: Nitrogen regulatory protein P-II (112 aa).

Residue Y51 is modified to O-UMP-tyrosine.

This sequence belongs to the P(II) protein family. As to quaternary structure, homotrimer.

P-II indirectly controls the transcription of the glutamine synthetase gene (glnA). P-II prevents NR-II-catalyzed conversion of NR-I to NR-I-phosphate, the transcriptional activator of glnA. When P-II is uridylylated to P-II-UMP, these events are reversed. When the ratio of Gln to 2-ketoglutarate decreases, P-II is uridylylated to P-II-UMP, which causes the deadenylation of glutamine synthetase, so activating the enzyme. The sequence is that of Nitrogen regulatory protein P-II (glnB) from Rhodobacter capsulatus (Rhodopseudomonas capsulata).